Reading from the N-terminus, the 439-residue chain is MNNVPNVEKQIGIDLYTTKTPGIGGKLRQQTEDFGVIEITNREEGTEGKYLILELTKRNWETHHLIRDLTRILRISQKRVGFAGTKDKRAVTTQKISIYDMEEEALQNVHLKDTELKILGRSNKSLELGDLTGNEFIITVRDIDLDEKELESRLSQTTASIKEQGGVPNFFGIQRFGALRPITHVVGESIVRNDIEKAAMAYIAASYPDEPEDTQEVRNRVFETKDYIEGLKGYPLQLRYERAMMHHLVSKPEDYAGSFETLPANIRKMFVHAYQSYIYNTIICSRIKKGLPLNRAVVGDIVCFKNKAGLPDKSRNERVTEDNIDGMNNLVKRNRAFVTAPLVGYSSELASGVPGEIEREVIEELNVPIEGFKVPSMEELSSKGLRREILLSTDPKYFIEEDELNEGKYRVTLDFSLPKGSYATTILREYMKVEPLKMS.

Asp87 acts as the Nucleophile in catalysis. One can recognise a TRUD domain in the interval 166-391 (GVPNFFGIQR…SKGLRREILL (226 aa)).

This sequence belongs to the pseudouridine synthase TruD family.

The enzyme catalyses uridine(13) in tRNA = pseudouridine(13) in tRNA. In terms of biological role, could be responsible for synthesis of pseudouridine from uracil-13 in transfer RNAs. The sequence is that of Probable tRNA pseudouridine synthase D from Methanococcoides burtonii (strain DSM 6242 / NBRC 107633 / OCM 468 / ACE-M).